The chain runs to 367 residues: Histidinol-phosphate aminotransferase (367 aa).

Residue K230 is modified to N6-(pyridoxal phosphate)lysine.

This sequence belongs to the class-II pyridoxal-phosphate-dependent aminotransferase family. Histidinol-phosphate aminotransferase subfamily. In terms of assembly, homodimer. It depends on pyridoxal 5'-phosphate as a cofactor.

The catalysed reaction is L-histidinol phosphate + 2-oxoglutarate = 3-(imidazol-4-yl)-2-oxopropyl phosphate + L-glutamate. Its pathway is amino-acid biosynthesis; L-histidine biosynthesis; L-histidine from 5-phospho-alpha-D-ribose 1-diphosphate: step 7/9. The chain is Histidinol-phosphate aminotransferase from Thermobifida fusca (strain YX).